A 174-amino-acid chain; its full sequence is Large ribosomal subunit protein uL22 (174 aa).

Belongs to the universal ribosomal protein uL22 family. Part of the 50S ribosomal subunit.

Functionally, this protein binds specifically to 23S rRNA. It makes multiple contacts with different domains of the 23S rRNA in the assembled 50S subunit and ribosome. The globular domain of the protein is located near the polypeptide exit tunnel on the outside of the subunit, while an extended beta-hairpin is found that lines the wall of the exit tunnel in the center of the 70S ribosome. This chain is Large ribosomal subunit protein uL22, found in Nanoarchaeum equitans (strain Kin4-M).